The sequence spans 437 residues: Doublesex- and mab-3-related transcription factor A2 (437 aa).

Residues 49–96 (CARCRNHGVVSALKGHKRYCRWKDCMCAKCTLIAERQRVMAAQVALRR) constitute a DNA-binding region (DM). 2 disordered regions span residues 163–254 (SVTP…ARQR) and 297–317 (DKSE…PSVS). Low complexity-rich tracts occupy residues 179–201 (SESV…SGSE) and 223–235 (SPSS…SESG). Residues 254–289 (RTPIDILTRVFPAQKRSVLELVLQGCGGDVVQAIEQ) enclose the DMA domain.

This sequence belongs to the DMRT family.

The protein resides in the nucleus. May be involved in sexual development. This chain is Doublesex- and mab-3-related transcription factor A2 (dmrta2), found in Xenopus tropicalis (Western clawed frog).